A 352-amino-acid chain; its full sequence is WAT1-related protein At1g11450 (352 aa).

The next 10 helical transmembrane spans lie at 14-34 (WPPMIVMVTSQVAMGSVNALV), 46-66 (IIGAYRMAISSFILVPIAYFL), 83-103 (FISGLLGASLMQFFYLLGLSY), 107-127 (TVACALVSLMPAITFAFALIL), 139-159 (AGMIKVMGTLICISGALFLTF), 187-207 (WLLGCLYLVIGIVLLSLWILF), 219-239 (FSSTCLMSIFAAFQCALLSLY), 253-273 (FVIGVIIYAGVIGQAMSTVAA), 283-303 (VFASAIMPVSLISATLFDFLI), and 308-328 (LYLGSVIGSVGTIIGLYVFLW). EamA domains lie at 27 to 157 (MGSV…ALFL) and 192 to 335 (LYLV…KETE).

It belongs to the drug/metabolite transporter (DMT) superfamily. Plant drug/metabolite exporter (P-DME) (TC 2.A.7.4) family.

The protein resides in the membrane. In Arabidopsis thaliana (Mouse-ear cress), this protein is WAT1-related protein At1g11450.